An 886-amino-acid polypeptide reads, in one-letter code: DNA mismatch repair protein MutS (886 aa).

An ATP-binding site is contributed by 626-633 (GPNMGGKS).

This sequence belongs to the DNA mismatch repair MutS family.

Its function is as follows. This protein is involved in the repair of mismatches in DNA. It is possible that it carries out the mismatch recognition step. This protein has a weak ATPase activity. The polypeptide is DNA mismatch repair protein MutS (Burkholderia ambifaria (strain ATCC BAA-244 / DSM 16087 / CCUG 44356 / LMG 19182 / AMMD) (Burkholderia cepacia (strain AMMD))).